Consider the following 241-residue polypeptide: Carboxy-S-adenosyl-L-methionine synthase (241 aa).

S-adenosyl-L-methionine is bound by residues Y38, G63–S65, D88–N89, D116–I117, N131, and R198.

It belongs to the class I-like SAM-binding methyltransferase superfamily. Cx-SAM synthase family. Homodimer.

It carries out the reaction prephenate + S-adenosyl-L-methionine = carboxy-S-adenosyl-L-methionine + 3-phenylpyruvate + H2O. Catalyzes the conversion of S-adenosyl-L-methionine (SAM) to carboxy-S-adenosyl-L-methionine (Cx-SAM). This Pseudoalteromonas translucida (strain TAC 125) protein is Carboxy-S-adenosyl-L-methionine synthase.